The primary structure comprises 488 residues: Glutamate--tRNA ligase (488 aa).

The 'HIGH' region signature appears at 16–26 (PSPTGEPHVGT). A 'KMSKS' region motif is present at residues 257 to 261 (KLSKR). Residue Lys260 participates in ATP binding.

Belongs to the class-I aminoacyl-tRNA synthetase family. Glutamate--tRNA ligase type 1 subfamily. In terms of assembly, monomer.

The protein resides in the cytoplasm. The catalysed reaction is tRNA(Glu) + L-glutamate + ATP = L-glutamyl-tRNA(Glu) + AMP + diphosphate. Its function is as follows. Catalyzes the attachment of glutamate to tRNA(Glu) in a two-step reaction: glutamate is first activated by ATP to form Glu-AMP and then transferred to the acceptor end of tRNA(Glu). The protein is Glutamate--tRNA ligase of Rhizobium etli (strain ATCC 51251 / DSM 11541 / JCM 21823 / NBRC 15573 / CFN 42).